A 143-amino-acid chain; its full sequence is Mediator of RNA polymerase II transcription subunit 21 (143 aa).

The stretch at lysine 53–threonine 130 forms a coiled coil.

The protein belongs to the Mediator complex subunit 21 family. Component of the Mediator complex.

The protein localises to the nucleus. Functionally, component of the Mediator complex, a coactivator involved in the regulated transcription of nearly all RNA polymerase II-dependent genes. Mediator functions as a bridge to convey information from gene-specific regulatory proteins to the basal RNA polymerase II transcription machinery. Mediator is recruited to promoters by direct interactions with regulatory proteins and serves as a scaffold for the assembly of a functional preinitiation complex with RNA polymerase II and the general transcription factors. The sequence is that of Mediator of RNA polymerase II transcription subunit 21 (SRB7) from Kluyveromyces lactis (strain ATCC 8585 / CBS 2359 / DSM 70799 / NBRC 1267 / NRRL Y-1140 / WM37) (Yeast).